The chain runs to 343 residues: Phenylalanine--tRNA ligase alpha subunit (343 aa).

A Mg(2+)-binding site is contributed by E256.

This sequence belongs to the class-II aminoacyl-tRNA synthetase family. Phe-tRNA synthetase alpha subunit type 1 subfamily. In terms of assembly, tetramer of two alpha and two beta subunits. The cofactor is Mg(2+).

The protein localises to the cytoplasm. It carries out the reaction tRNA(Phe) + L-phenylalanine + ATP = L-phenylalanyl-tRNA(Phe) + AMP + diphosphate + H(+). This Phytoplasma australiense protein is Phenylalanine--tRNA ligase alpha subunit.